Here is a 143-residue protein sequence, read N- to C-terminus: Endoribonuclease YbeY (143 aa).

Residues H109, H113, and H119 each coordinate Zn(2+).

The protein belongs to the endoribonuclease YbeY family. Zn(2+) serves as cofactor.

It localises to the cytoplasm. Single strand-specific metallo-endoribonuclease involved in late-stage 70S ribosome quality control and in maturation of the 3' terminus of the 16S rRNA. The polypeptide is Endoribonuclease YbeY (Carboxydothermus hydrogenoformans (strain ATCC BAA-161 / DSM 6008 / Z-2901)).